The chain runs to 313 residues: Acetaldehyde dehydrogenase (313 aa).

12–15 (SGNI) is an NAD(+) binding site. C132 serves as the catalytic Acyl-thioester intermediate. NAD(+) is bound by residues 163-171 (SAGPGTRAN) and N291.

This sequence belongs to the acetaldehyde dehydrogenase family.

The enzyme catalyses acetaldehyde + NAD(+) + CoA = acetyl-CoA + NADH + H(+). This is Acetaldehyde dehydrogenase (bphG) from Burkholderia cepacia (Pseudomonas cepacia).